Consider the following 64-residue polypeptide: uncharacterized protein (64 aa).

This is an uncharacterized protein from Escherichia coli (strain K12).